The primary structure comprises 417 residues: Serine hydroxymethyltransferase (417 aa).

(6S)-5,6,7,8-tetrahydrofolate is bound by residues L121 and 125 to 127 (GHL). At K229 the chain carries N6-(pyridoxal phosphate)lysine. 355–357 (SPF) contributes to the (6S)-5,6,7,8-tetrahydrofolate binding site.

The protein belongs to the SHMT family. In terms of assembly, homodimer. The cofactor is pyridoxal 5'-phosphate.

Its subcellular location is the cytoplasm. It catalyses the reaction (6R)-5,10-methylene-5,6,7,8-tetrahydrofolate + glycine + H2O = (6S)-5,6,7,8-tetrahydrofolate + L-serine. It participates in one-carbon metabolism; tetrahydrofolate interconversion. It functions in the pathway amino-acid biosynthesis; glycine biosynthesis; glycine from L-serine: step 1/1. Catalyzes the reversible interconversion of serine and glycine with tetrahydrofolate (THF) serving as the one-carbon carrier. This reaction serves as the major source of one-carbon groups required for the biosynthesis of purines, thymidylate, methionine, and other important biomolecules. Also exhibits THF-independent aldolase activity toward beta-hydroxyamino acids, producing glycine and aldehydes, via a retro-aldol mechanism. In Salmonella choleraesuis (strain SC-B67), this protein is Serine hydroxymethyltransferase.